A 141-amino-acid polypeptide reads, in one-letter code: Large ribosomal subunit protein uL11 (141 aa).

The protein belongs to the universal ribosomal protein uL11 family. In terms of assembly, part of the ribosomal stalk of the 50S ribosomal subunit. Interacts with L10 and the large rRNA to form the base of the stalk. L10 forms an elongated spine to which L12 dimers bind in a sequential fashion forming a multimeric L10(L12)X complex. In terms of processing, one or more lysine residues are methylated.

In terms of biological role, forms part of the ribosomal stalk which helps the ribosome interact with GTP-bound translation factors. In Prochlorococcus marinus subsp. pastoris (strain CCMP1986 / NIES-2087 / MED4), this protein is Large ribosomal subunit protein uL11.